The following is a 338-amino-acid chain: Protein FosB (338 aa).

Disordered regions lie at residues 1–54 (MFQA…PGSF) and 80–179 (AQSQ…RREL). Polar residues-rich tracts occupy residues 13 to 31 (SRCS…SVDS) and 102 to 112 (TSYSTPGLSAY). Position 27 is a phosphoserine (Ser27). Residues 123–137 (PSTSTTTSGPVSARP) are compositionally biased toward low complexity. The bZIP domain maps to 155 to 218 (EEKRRVRRER…ERLEFVLVAH (64 aa)). The basic motif stretch occupies residues 157–182 (KRRVRRERNKLAAAKCRNRRRELTDR). The tract at residues 183–211 (LQAETDQLEEEKAELESEIAELQKEKERL) is leucine-zipper. 2 disordered regions span residues 222–276 (CKIP…PPNL) and 316–338 (GAQR…LLAL). Positions 256–265 (LPPPPPPPLP) are enriched in pro residues. 2 stretches are compositionally biased toward polar residues: residues 266–276 (FQSSRDAPPNL) and 318–338 (QRTS…LLAL).

It belongs to the bZIP family. Fos subfamily. In terms of assembly, heterodimer; binds to DNA as heterodimer. Component of an AP-1 transcription factor complex; composed of FOS-JUN heterodimers. As part of the AP-1 transcription factor complex, forms heterodimers with JUN, JUNB or JUND, thereby binding to the AP-1 consensus sequence and stimulating transcription. Interacts with the BAF multiprotein chromatin-remodeling complex subunits SMARCB1 and SMARCD1. Interacts with ARID1A and JUN. Homodimer under oxidizing conditions and monomer under reducing conditions (in vitro). Heterodimer; binds to DNA as heterodimer. Forms heterodimers with JUNB, JUN or JUND; thereby binding to the AP-1 consensus sequence but does not stimulate transcription. Forms heterodimers with JUND under oxidizing conditions. In terms of processing, phosphorylated. Post-translationally, phosphorylated at Ser-27 by CSNK2A1; phosphorylation increases protein stability and transactivation potential. As to expression, expressed in brain, including the preoptic area of the hypothalamus, the main and accessory olfactory bulbs, the pyriform cortex and the hippocampus (at protein level). Expressed in the neurons of the subgranular zone of the dentate gyrus in the hippocampus (at protein level). Expressed in pyramidal cells in CA1 and CA3, in the dentate gyrus and the nucleus accumbens of the striatum (at protein level). In terms of tissue distribution, expressed in the core and shell of the nucleus accumbens of the striatum (at protein level). Expressed in the neurons of the subgranular zone of the dentate gyrus in the hippocampus (at protein level).

The protein resides in the nucleus. Heterodimerizes with proteins of the JUN family to form an AP-1 transcription factor complex, thereby enhancing their DNA binding activity to gene promoters containing an AP-1 consensus sequence 5'-TGA[GC]TCA-3' and enhancing their transcriptional activity. As part of the AP-1 complex, facilitates enhancer selection together with cell-type-specific transcription factors by collaboratively binding to nucleosomal enhancers and recruiting the SWI/SNF (BAF) chromatin remodeling complex to establish accessible chromatin. Together with JUN, plays a role in activation-induced cell death of T cells by binding to the AP-1 promoter site of FASLG/CD95L, and inducing its transcription in response to activation of the TCR/CD3 signaling pathway. Exhibits transactivation activity in vitro. Involved in the display of nurturing behavior towards newborns. May play a role in neurogenesis in the hippocampus and in learning and memory-related tasks by regulating the expression of various genes involved in neurogenesis, depression and epilepsy. Implicated in behavioral responses related to morphine reward and spatial memory. Functionally, exhibits lower transactivation activity than isoform 1 in vitro. The heterodimer with JUN does not display any transcriptional activity, and may thereby act as an transcriptional inhibitor. May be involved in the regulation of neurogenesis in the hippocampus. May play a role in synaptic modifications in nucleus accumbens medium spiny neurons and thereby play a role in adaptive and pathological reward-dependent learning, including maladaptive responses involved in drug addiction. Seems to be more stably expressed with a half-life of ~9.5 hours in cell culture as compared to 1.5 hours half-life of isoform 1. The polypeptide is Protein FosB (Mus musculus (Mouse)).